A 530-amino-acid polypeptide reads, in one-letter code: Bifunctional purine biosynthesis protein PurH (530 aa).

An MGS-like domain is found at 1–149 (MASDFLPVHR…KNFARVAVAT (149 aa)).

The protein belongs to the PurH family.

The catalysed reaction is (6R)-10-formyltetrahydrofolate + 5-amino-1-(5-phospho-beta-D-ribosyl)imidazole-4-carboxamide = 5-formamido-1-(5-phospho-D-ribosyl)imidazole-4-carboxamide + (6S)-5,6,7,8-tetrahydrofolate. It catalyses the reaction IMP + H2O = 5-formamido-1-(5-phospho-D-ribosyl)imidazole-4-carboxamide. Its pathway is purine metabolism; IMP biosynthesis via de novo pathway; 5-formamido-1-(5-phospho-D-ribosyl)imidazole-4-carboxamide from 5-amino-1-(5-phospho-D-ribosyl)imidazole-4-carboxamide (10-formyl THF route): step 1/1. It functions in the pathway purine metabolism; IMP biosynthesis via de novo pathway; IMP from 5-formamido-1-(5-phospho-D-ribosyl)imidazole-4-carboxamide: step 1/1. This Xylella fastidiosa (strain M12) protein is Bifunctional purine biosynthesis protein PurH.